The sequence spans 585 residues: Frizzled-10 (585 aa).

A signal peptide spans methionine 1–glycine 24. At isoleucine 25 to glutamine 229 the chain is on the extracellular side. In terms of domain architecture, FZ spans proline 33–alanine 154. 5 disulfides stabilise this stretch: cysteine 38–cysteine 99, cysteine 46–cysteine 92, cysteine 83–cysteine 121, cysteine 110–cysteine 151, and cysteine 114–cysteine 138. Asparagine 52 carries an N-linked (GlcNAc...) asparagine glycan. The interval proline 155–serine 195 is disordered. The N-linked (GlcNAc...) asparagine glycan is linked to asparagine 157. The helical transmembrane segment at phenylalanine 230–valine 250 threads the bilayer. Residues leucine 251–arginine 265 are Cytoplasmic-facing. A helical transmembrane segment spans residues proline 266–phenylalanine 286. The Extracellular segment spans residues serine 287–threonine 314. Residues isoleucine 315–threonine 335 traverse the membrane as a helical segment. Residues leucine 336 to serine 355 lie on the Cytoplasmic side of the membrane. The chain crosses the membrane as a helical span at residues serine 356–methionine 376. The Extracellular segment spans residues arginine 377–alanine 397. The helical transmembrane segment at leucine 398–leucine 418 threads the bilayer. At serine 419–arginine 447 the chain is on the cytoplasmic side. The chain crosses the membrane as a helical span at residues isoleucine 448 to tyrosine 468. Over glutamate 469–glutamate 506 the chain is Extracellular. N-linked (GlcNAc...) asparagine glycans are attached at residues asparagine 489 and asparagine 499. Residues isoleucine 507–tryptophan 527 traverse the membrane as a helical segment. Topologically, residues threonine 528–valine 585 are cytoplasmic. The Lys-Thr-X-X-X-Trp motif, mediates interaction with the PDZ domain of Dvl family members motif lies at lysine 530–tryptophan 535. The short motif at threonine 583–valine 585 is the PDZ-binding element.

It belongs to the G-protein coupled receptor Fz/Smo family. In terms of assembly, interacts with WNT7A. As to expression, expressed in the dorsal ectoderm overlying the developing spinal cord.

It localises to the cell membrane. Receptor for Wnt proteins. Functions in the canonical Wnt/beta-catenin signaling pathway. Activation by WNT7A induces expression of beta-catenin target genes. The canonical Wnt/beta-catenin signaling pathway leads to the activation of disheveled proteins, inhibition of GSK-3 kinase, nuclear accumulation of beta-catenin and activation of Wnt target genes. A second signaling pathway involving PKC and calcium fluxes has been seen for some family members, but it is not yet clear if it represents a distinct pathway or if it can be integrated in the canonical pathway, as PKC seems to be required for Wnt-mediated inactivation of GSK-3 kinase. Both pathways seem to involve interactions with G-proteins. May be involved in transduction and intercellular transmission of polarity information during tissue morphogenesis and/or in differentiated tissues. The chain is Frizzled-10 (FZD10) from Gallus gallus (Chicken).